The primary structure comprises 192 residues: Thymidylate kinase (192 aa).

7–14 (GVDGVGKS) serves as a coordination point for ATP.

It belongs to the thymidylate kinase family.

The catalysed reaction is dTMP + ATP = dTDP + ADP. Phosphorylation of dTMP to form dTDP in both de novo and salvage pathways of dTTP synthesis. This chain is Thymidylate kinase, found in Campylobacter fetus subsp. fetus (strain 82-40).